Consider the following 811-residue polypeptide: Elongation factor G, mitochondrial (811 aa).

The N-terminal 64 residues, 1 to 64, are a transit peptide targeting the mitochondrion; the sequence is MSAIARAAAR…FQQSFQRRWA (64 aa). Residues 96 to 394 form the tr-type G domain; sequence RRQRNVGISA…GVCAYLPNPS (299 aa). GTP contacts are provided by residues 105–112, 192–196, and 246–249; these read AHIDSGKT, DTPGH, and NKMD.

The protein belongs to the TRAFAC class translation factor GTPase superfamily. Classic translation factor GTPase family. EF-G/EF-2 subfamily.

The protein resides in the mitochondrion. The protein operates within protein biosynthesis; polypeptide chain elongation. Mitochondrial GTPase that catalyzes the GTP-dependent ribosomal translocation step during translation elongation. During this step, the ribosome changes from the pre-translocational (PRE) to the post-translocational (POST) state as the newly formed A-site-bound peptidyl-tRNA and P-site-bound deacylated tRNA move to the P and E sites, respectively. Catalyzes the coordinated movement of the two tRNA molecules, the mRNA and conformational changes in the ribosome. In Cryptococcus neoformans var. neoformans serotype D (strain B-3501A) (Filobasidiella neoformans), this protein is Elongation factor G, mitochondrial.